A 337-amino-acid chain; its full sequence is Ornithine carbamoyltransferase, catabolic (337 aa).

Carbamoyl phosphate-binding positions include 57 to 60 (STRT), Gln84, Arg108, and 135 to 138 (HPTQ). Residues Asn167, Asp231, and 235–236 (SM) each bind L-ornithine. Carbamoyl phosphate contacts are provided by residues 272 to 273 (CL) and Arg317.

Belongs to the aspartate/ornithine carbamoyltransferase superfamily. OTCase family.

It localises to the cytoplasm. The enzyme catalyses carbamoyl phosphate + L-ornithine = L-citrulline + phosphate + H(+). The protein operates within amino-acid degradation; L-arginine degradation via ADI pathway; carbamoyl phosphate from L-arginine: step 2/2. Its function is as follows. Reversibly catalyzes the transfer of the carbamoyl group from carbamoyl phosphate (CP) to the N(epsilon) atom of ornithine (ORN) to produce L-citrulline. In Streptococcus pyogenes serotype M1, this protein is Ornithine carbamoyltransferase, catabolic (arcB).